The primary structure comprises 367 residues: Ferrochelatase (367 aa).

Fe cation contacts are provided by histidine 213 and glutamate 294.

This sequence belongs to the ferrochelatase family.

The protein resides in the cytoplasm. The catalysed reaction is heme b + 2 H(+) = protoporphyrin IX + Fe(2+). Its pathway is porphyrin-containing compound metabolism; protoheme biosynthesis; protoheme from protoporphyrin-IX: step 1/1. In terms of biological role, catalyzes the ferrous insertion into protoporphyrin IX. The polypeptide is Ferrochelatase (Dechloromonas aromatica (strain RCB)).